We begin with the raw amino-acid sequence, 93 residues long: DNA/RNA-binding protein Alba (93 aa).

N6-acetyllysine is present on K11.

It belongs to the histone-like Alba family. Acetylated. Acetylation at Lys-11 decreases DNA-binding affinity.

The protein localises to the cytoplasm. It localises to the chromosome. Binds double-stranded DNA tightly but without sequence specificity. Involved in DNA compaction. This is DNA/RNA-binding protein Alba from Pyrococcus horikoshii (strain ATCC 700860 / DSM 12428 / JCM 9974 / NBRC 100139 / OT-3).